A 130-amino-acid chain; its full sequence is Iron-sulfur cluster insertion protein ErpA (130 aa).

Iron-sulfur cluster-binding residues include Cys-46, Cys-116, and Cys-118.

It belongs to the HesB/IscA family. As to quaternary structure, homodimer. It depends on iron-sulfur cluster as a cofactor.

In terms of biological role, required for insertion of 4Fe-4S clusters for at least IspG. The chain is Iron-sulfur cluster insertion protein ErpA from Legionella pneumophila (strain Lens).